We begin with the raw amino-acid sequence, 451 residues long: UDP-N-acetylmuramoylalanine--D-glutamate ligase (451 aa).

Position 119 to 125 (119 to 125 (GSNGKTT)) interacts with ATP.

This sequence belongs to the MurCDEF family.

The protein resides in the cytoplasm. It carries out the reaction UDP-N-acetyl-alpha-D-muramoyl-L-alanine + D-glutamate + ATP = UDP-N-acetyl-alpha-D-muramoyl-L-alanyl-D-glutamate + ADP + phosphate + H(+). It functions in the pathway cell wall biogenesis; peptidoglycan biosynthesis. Its function is as follows. Cell wall formation. Catalyzes the addition of glutamate to the nucleotide precursor UDP-N-acetylmuramoyl-L-alanine (UMA). This is UDP-N-acetylmuramoylalanine--D-glutamate ligase from Bacillus cytotoxicus (strain DSM 22905 / CIP 110041 / 391-98 / NVH 391-98).